Here is a 450-residue protein sequence, read N- to C-terminus: Exodeoxyribonuclease 7 large subunit (450 aa).

It belongs to the XseA family. As to quaternary structure, heterooligomer composed of large and small subunits.

It is found in the cytoplasm. It catalyses the reaction Exonucleolytic cleavage in either 5'- to 3'- or 3'- to 5'-direction to yield nucleoside 5'-phosphates.. Bidirectionally degrades single-stranded DNA into large acid-insoluble oligonucleotides, which are then degraded further into small acid-soluble oligonucleotides. The chain is Exodeoxyribonuclease 7 large subunit from Listeria monocytogenes serovar 1/2a (strain ATCC BAA-679 / EGD-e).